We begin with the raw amino-acid sequence, 1381 residues long: Non-structural polyprotein 1AB (1381 aa).

Residues 121–160 adopt a coiled-coil conformation; the sequence is VLVQEHKKLDSDLKESRRELSQLKLEHSLLRHDYERLVRE. 5 helical membrane passes run 169 to 189, 249 to 269, 279 to 299, 324 to 344, and 365 to 385; these read FKFS…MSAV, LALG…LVGT, LYML…VALA, AFAI…CLAM, and FSHL…AILI. Active-site charge relay system; for serine protease activity residues include histidine 477, aspartate 506, and serine 569. Tyrosine 694 is modified (O-(5'-phospho-RNA)-tyrosine). Positions 703–732 form a coiled coil; that stretch reads TRDQLREMAEAAREADDDFDDYEEEKNEVD. The interval 856-879 is disordered; sequence MQRKKQKPKKREEGPERGPINPDE. In terms of domain architecture, RdRp catalytic spans 1122–1254; the sequence is SVFIEFDWTR…TFDHVPPDYV (133 aa).

The protein belongs to the astroviridae polyprotein 1AB family. Monomer. In terms of processing, cleaved by the viral and host proteases. The protease is probably autocatalytically cleaved.

Its subcellular location is the host membrane. It carries out the reaction RNA(n) + a ribonucleoside 5'-triphosphate = RNA(n+1) + diphosphate. Responsible for the cleavage of the polyprotein into functional products. Functionally, protein covalently attached to the 5' extremity of the genomic and subgenomic RNAs. It may serve as a primer for the replicase. This chain is Non-structural polyprotein 1AB (ORF1), found in Neovison vison (American mink).